We begin with the raw amino-acid sequence, 423 residues long: COP9 signalosome complex subunit 3 (423 aa).

An N-acetylalanine modification is found at A2. The 169-residue stretch at N197–E365 folds into the PCI domain. Residues Q402–S423 are disordered. 3 positions are modified to phosphoserine: S407, S410, and S423.

This sequence belongs to the CSN3 family. Component of the CSN complex, composed of COPS1/GPS1, COPS2, COPS3, COPS4, COPS5, COPS6, COPS7 (COPS7A or COPS7B), COPS8 and COPS9. In the complex, it probably interacts directly with COPS1, COPS4, COPS8 and COPS9. Interacts with CK2 and PKD. Interacts with the translation initiation factor EIF3S6 and IKBKG. Interacts with ERCC6.

The protein localises to the cytoplasm. It is found in the nucleus. Functionally, component of the COP9 signalosome complex (CSN), a complex involved in various cellular and developmental processes. The CSN complex is an essential regulator of the ubiquitin (Ubl) conjugation pathway by mediating the deneddylation of the cullin subunits of SCF-type E3 ligase complexes, leading to decrease the Ubl ligase activity of SCF-type complexes such as SCF, CSA or DDB2. The complex is also involved in phosphorylation of p53/TP53, c-jun/JUN, IkappaBalpha/NFKBIA, ITPK1 and IRF8/ICSBP, possibly via its association with CK2 and PKD kinases. CSN-dependent phosphorylation of TP53 and JUN promotes and protects degradation by the Ubl system, respectively. Essential to maintain the survival of epiblast cells and thus the development of the postimplantation embryo. The polypeptide is COP9 signalosome complex subunit 3 (Cops3) (Rattus norvegicus (Rat)).